Here is a 936-residue protein sequence, read N- to C-terminus: Protocadherin gamma-A10 (936 aa).

An N-terminal signal peptide occupies residues 1–32 (MAAQRNRSKESKDCSGLVLLCLFFGIPWEAGA). Cadherin domains follow at residues 33-137 (RQIS…APKF), 138-246 (QAEN…APVF), 247-351 (TLPE…SPEL), 352-456 (TITS…PPTF), 457-566 (SQVS…APEI), and 574-687 (DGST…SPAN). Residues 33-696 (RQISYSIPEE…NSETSDLTLY (664 aa)) lie on the Extracellular side of the membrane. Asn51 is a glycosylation site (N-linked (GlcNAc...) asparagine). 2 N-linked (GlcNAc...) asparagine glycosylation sites follow: Asn423 and Asn549. Residues 697–717 (LVVAVAAVSCVFLAFVIVLLA) traverse the membrane as a helical segment. Topologically, residues 718–936 (HRLRRWHKSR…KKKSGKKEKK (219 aa)) are cytoplasmic. Disordered regions lie at residues 806–845 (EDTP…WPNN) and 906–936 (ATLT…KEKK). Residues 820-845 (WRFSQAQRPGTSGSQNGDDTGTWPNN) are compositionally biased toward polar residues. A compositionally biased stretch (basic residues) spans 926–936 (NKKKSGKKEKK).

It is found in the cell membrane. In terms of biological role, potential calcium-dependent cell-adhesion protein. May be involved in the establishment and maintenance of specific neuronal connections in the brain. The polypeptide is Protocadherin gamma-A10 (PCDHGA10) (Homo sapiens (Human)).